The chain runs to 214 residues: Thymidylate kinase (214 aa).

10 to 17 (GGEGAGKS) provides a ligand contact to ATP.

The protein belongs to the thymidylate kinase family.

The catalysed reaction is dTMP + ATP = dTDP + ADP. Phosphorylation of dTMP to form dTDP in both de novo and salvage pathways of dTTP synthesis. In Brucella abortus (strain S19), this protein is Thymidylate kinase.